Reading from the N-terminus, the 285-residue chain is MMSDYNWFEGIPFPAISYQREILEDIRNKFVVKEEDLLILTYPKSGTNWLIEIVCLIQTKGDPKWIQTVPIWNRSPWIETDIGYSALINKEGPRLITSHLPIHLFSKSFFSSKAKAIYLVRNPRDILVSGYFFWGNTNLVKNPGSLGTYFEWFLKGNVLFGSWFEHVRGWLSMREWDNFLVLYYEDIKKDTKGTIKKICDFLGKNLGPDELDLVLKYSSFQAMKENNMSNFSLIKEDQVTNGLKLMRKGTIGDWKNHFTVAQAEAFDKVFQEKMAGFPPGIFPWE.

The 3'-phosphoadenylyl sulfate site is built by Lys-44, Ser-45, Gly-46, Thr-47, Asn-48, and Trp-49. His-99 (proton acceptor) is an active-site residue. Residues Arg-121, Ser-129, Tyr-184, Ser-218, Met-223, Arg-247, Lys-248, and Gly-249 each contribute to the 3'-phosphoadenylyl sulfate site.

The protein belongs to the sulfotransferase 1 family. As to quaternary structure, homodimer. Highly expressed in liver.

The protein localises to the cytoplasm. The enzyme catalyses an alcohol + 3'-phosphoadenylyl sulfate = an alkyl sulfate + adenosine 3',5'-bisphosphate + H(+). It catalyses the reaction taurolithocholate + 3'-phosphoadenylyl sulfate = taurolithocholate 3-sulfate + adenosine 3',5'-bisphosphate + H(+). The catalysed reaction is pregnenolone + 3'-phosphoadenylyl sulfate = pregnenolone sulfate + adenosine 3',5'-bisphosphate + H(+). It carries out the reaction 3beta-hydroxyandrost-5-en-17-one + 3'-phosphoadenylyl sulfate = dehydroepiandrosterone 3-sulfate + adenosine 3',5'-bisphosphate + H(+). The enzyme catalyses lithocholate + 3'-phosphoadenylyl sulfate = lithocholate sulfate + adenosine 3',5'-bisphosphate + H(+). It catalyses the reaction (24S)-hydroxycholesterol + 3'-phosphoadenylyl sulfate = (24S)-hydroxycholesterol 24-sulfate + adenosine 3',5'-bisphosphate + H(+). The catalysed reaction is (24S)-hydroxycholesterol + 3'-phosphoadenylyl sulfate = (24S)-hydroxycholesterol 3-sulfate + adenosine 3',5'-bisphosphate + H(+). It carries out the reaction (24S)-hydroxycholesterol 24-sulfate + 3'-phosphoadenylyl sulfate = (24S)-hydroxycholesterol 3,24-disulfate + adenosine 3',5'-bisphosphate + H(+). The enzyme catalyses androsterone + 3'-phosphoadenylyl sulfate = androsterone 3alpha-sulfate + adenosine 3',5'-bisphosphate + H(+). Its function is as follows. Sulfotransferase that utilizes 3'-phospho-5'-adenylyl sulfate (PAPS) as sulfonate donor to catalyze the sulfonation of steroids and bile acids in the liver and adrenal glands. Mediates the sulfation of a wide range of steroids and sterols, including pregnenolone, androsterone, DHEA, bile acids, cholesterol and as well many xenobiotics that contain alcohol and phenol functional groups. Sulfonation increases the water solubility of most compounds, and therefore their renal excretion, but it can also result in bioactivation to form active metabolites. Plays an important role in maintening steroid and lipid homeostasis. Plays a key role in bile acid metabolism. In addition, catalyzes the metabolic activation of potent carcinogenic polycyclic arylmethanols. The protein is Sulfotransferase 2A1 (Sult2a1) of Mus musculus (Mouse).